The primary structure comprises 102 residues: MARERIRVKLCGFDVELVDQSSRAIVHAVQKAGAEVLGPIPLPTRMHKFTVLRSPHVNKKSREQFEMRTHKRLIDIIEPSQEVMNALMGLELSAGVDVRIKQ.

The protein belongs to the universal ribosomal protein uS10 family. As to quaternary structure, part of the 30S ribosomal subunit.

In terms of biological role, involved in the binding of tRNA to the ribosomes. This chain is Small ribosomal subunit protein uS10, found in Treponema pallidum (strain Nichols).